A 387-amino-acid chain; its full sequence is SpoIVD-associated factor A (387 aa).

The region spanning 2 to 47 is the LysM domain; the sequence is KIHIVQKGDSLWKIAEKYGVDVEEVKKLNTQLSNPDLIMPGMKIKV. Disordered regions lie at residues 49–106 and 355–387; these read SEGV…MPNL and NPNP…EENE. Residues 70-96 are compositionally biased toward basic and acidic residues; it reads KQEHPYAKEKPKSVVDVEDTKPKEKKS. Over residues 368 to 377 the composition is skewed to polar residues; it reads PMTNQPSVNQ.

The protein resides in the spore cortex. Functionally, probably involved in the assembly of some coat protein components implicated in both lysozyme resistance and germination. Could be required for the assembly of CotG. Associates with SpoIVD during the early stage of coat assembly. The protein is SpoIVD-associated factor A (safA) of Bacillus subtilis (strain 168).